The following is a 439-amino-acid chain: LETRLYECTECEKTFSNQSVLSLHQRTHTGEKIFKCTECEKSFMKRSQLIVHKKCHIEERPYMCTFCEKGYNQHSKLIEHIRTHTGEKPFTCTECKKSFTKRCNLTEHLRIHTGAKPHKCNLCDKTFHYPSNLVEHQRTHTGDRPFQCTECDKSFIKMSKLMVHLRIHTGEKPYKCSECDKSFSQQSTLVVHQRTHTGERPFQCSHCEKSFSYHYAFVVHERTHTGEKPYKCSMCDKAYSQRSNLKLHQKTHESKPQQDSPNCEKTFEQESAPKTATMDQLHESAGLEKVPELPEATNSVESPEAIDDYEKNYIPWSPLSEYLGVFLPPEKQHKCTECDKCFLEKSKLVVHQRTHTGERPFKCSVCDKTFIRMVHLLEHRKIHDGDRPYTCAECGKSFIRMSKLTVHRRTHTGERPYICAECGKQFSQQSNLVVHQRIH.

9 C2H2-type zinc fingers span residues 6–28 (YECTECEKTFSNQSVLSLHQRTH), 34–56 (FKCTECEKSFMKRSQLIVHKKCH), 62–84 (YMCTFCEKGYNQHSKLIEHIRTH), 90–112 (FTCTECKKSFTKRCNLTEHLRIH), 118–140 (HKCNLCDKTFHYPSNLVEHQRTH), 146–168 (FQCTECDKSFIKMSKLMVHLRIH), 174–196 (YKCSECDKSFSQQSTLVVHQRTH), 202–224 (FQCSHCEKSFSYHYAFVVHERTH), and 230–252 (YKCSMCDKAYSQRSNLKLHQKTH). Disordered regions lie at residues 246–275 (KLHQKTHESKPQQDSPNCEKTFEQESAPKT) and 285–304 (AGLEKVPELPEATNSVESPE). 4 C2H2-type zinc fingers span residues 333–355 (HKCTECDKCFLEKSKLVVHQRTH), 361–383 (FKCSVCDKTFIRMVHLLEHRKIH), 389–411 (YTCAECGKSFIRMSKLTVHRRTH), and 417–439 (YICAECGKQFSQQSNLVVHQRIH).

It belongs to the krueppel C2H2-type zinc-finger protein family.

It localises to the nucleus. In terms of biological role, may be involved in transcriptional regulation. This is Oocyte zinc finger protein XlCOF28 from Xenopus laevis (African clawed frog).